Consider the following 160-residue polypeptide: Lymphocyte antigen 96 (160 aa).

The N-terminal stretch at 1 to 16 is a signal peptide; the sequence is MLPFILFSTLLPLIFT. 3 disulfide bridges follow: C25–C51, C37–C148, and C95–C105. N-linked (GlcNAc...) asparagine glycosylation is found at N26, N77, and N101. The tract at residues 119-123 is interaction with lipopolysaccharide; it reads FSFKG. The N-linked (GlcNAc...) asparagine glycan is linked to N150.

As to quaternary structure, heterogeneous homomer formed from homodimers; disulfide-linked. Belongs to the lipopolysaccharide (LPS) receptor, a multi-protein complex containing at least CD14, LY96 and TLR4. Binds to the extracellular domains of TLR2 and TLR4. Ligand binding induces interaction with TLR4 and oligomerization of the complex. N-glycosylated.

Its subcellular location is the secreted. It localises to the extracellular space. Binds bacterial lipopolysaccharide (LPS). Cooperates with TLR4 in the innate immune response to bacterial lipopolysaccharide (LPS), and with TLR2 in the response to cell wall components from Gram-positive and Gram-negative bacteria. Enhances TLR4-dependent activation of NF-kappa-B. Cells expressing both LY96 and TLR4, but not TLR4 alone, respond to LPS. This is Lymphocyte antigen 96 (LY96) from Cricetulus griseus (Chinese hamster).